Reading from the N-terminus, the 134-residue chain is Retinol-binding protein 2 (134 aa).

All-trans-retinol contacts are provided by K41 and Q109.

Belongs to the calycin superfamily. Fatty-acid binding protein (FABP) family. Higher expression in adult small intestine and to a much lesser extent in fetal kidney.

It is found in the cytoplasm. In terms of biological role, intracellular transport of retinol. The protein is Retinol-binding protein 2 (RBP2) of Homo sapiens (Human).